An 817-amino-acid polypeptide reads, in one-letter code: MPRPLAALLSTACILSFFIALFPRAASSRDILPLGSSLVVESYESSTLQSSDGTFSSGFYEVYTHAFTFSVWYSKTEAAAANNKTIVWSANPDRPVHARRSALTLQKDGNMVLTDYDGAAVWRADGNNFTGVQRARLLDTGNLVIEDSGGNTVWQSFDSPTDTFLPTQLITAATRLVPTTQSRSPGNYIFRFSDLSVLSLIYHVPQVSDIYWPDPDQNLYQDGRNQYNSTRLGMLTDSGVLASSDFADGQALVASDVGPGVKRRLTLDPDGNLRLYSMNDSDGSWSVSMVAMTQPCNIHGLCGPNGICHYSPTPTCSCPPGYATRNPGNWTEGCMAIVNTTCDRYDKRSMRFVRLPNTDFWGSDQQHLLSVSLRTCRDICISDCTCKGFQYQEGTGSCYPKAYLFSGRTYPTSDVRTIYLKLPTGVSVSNALIPRSDVFDSVPRRLDCDRMNKSIREPFPDVHKTGGGESKWFYFYGFIAAFFVVEVSFISFAWFFVLKRELRPSELWASEKGYKAMTSNFRRYSYRELVKATRKFKVELGRGESGTVYKGVLEDDRHVAVKKLENVRQGKEVFQAELSVIGRINHMNLVRIWGFCSEGSHRLLVSEYVENGSLANILFSEGGNILLDWEGRFNIALGVAKGLAYLHHECLEWVIHCDVKPENILLDQAFEPKITDFGLVKLLNRGGSTQNVSHVRGTLGYIAPEWVSSLPITAKVDVYSYGVVLLELLTGTRVSELVGGTDEVHSMLRKLVRMLSAKLEGEEQSWIDGYLDSKLNRPVNYVQARTLIKLAVSCLEEDRSKRPTMEHAVQTLLSADD.

The first 28 residues, 1–28 (MPRPLAALLSTACILSFFIALFPRAASS), serve as a signal peptide directing secretion. The region spanning 29–158 (RDILPLGSSL…GGNTVWQSFD (130 aa)) is the Bulb-type lectin domain. At 29–472 (RDILPLGSSL…HKTGGGESKW (444 aa)) the chain is on the extracellular side. 4 N-linked (GlcNAc...) asparagine glycosylation sites follow: Asn83, Asn128, Asn228, and Asn279. The region spanning 292–328 (MTQPCNIHGLCGPNGICHYSPTPTCSCPPGYATRNPG) is the EGF-like domain. Disulfide bonds link Cys296–Cys308 and Cys302–Cys316. N-linked (GlcNAc...) asparagine glycosylation is found at Asn329 and Asn339. One can recognise a PAN domain in the interval 342-424 (CDRYDKRSMR…VRTIYLKLPT (83 aa)). Intrachain disulfides connect Cys376–Cys398 and Cys384–Cys386. Asn452 carries an N-linked (GlcNAc...) asparagine glycan. A helical transmembrane segment spans residues 473-498 (FYFYGFIAAFFVVEVSFISFAWFFVL). Residues 499-817 (KRELRPSELW…AVQTLLSADD (319 aa)) lie on the Cytoplasmic side of the membrane. The region spanning 534–817 (RKFKVELGRG…AVQTLLSADD (284 aa)) is the Protein kinase domain. ATP is bound by residues 540-548 (LGRGESGTV) and Lys562. The active-site Proton acceptor is the Asp658.

This sequence belongs to the protein kinase superfamily. Ser/Thr protein kinase family. In terms of tissue distribution, expressed predominantly in the shoots and roots of young maize seedlings, and to a lesser extent in the silks.

It is found in the membrane. It catalyses the reaction L-seryl-[protein] + ATP = O-phospho-L-seryl-[protein] + ADP + H(+). The enzyme catalyses L-threonyl-[protein] + ATP = O-phospho-L-threonyl-[protein] + ADP + H(+). Functionally, probable receptor. Interaction with a ligand in the extracellular domain triggers the protein kinase activity of the cytoplasmic domain. This is Putative receptor protein kinase ZmPK1 (PK1) from Zea mays (Maize).